The primary structure comprises 231 residues: Ureidoacrylate amidohydrolase RutB (231 aa).

Asp25 serves as the catalytic Proton acceptor. The active site involves Lys134. Cys167 functions as the Nucleophile in the catalytic mechanism.

The protein belongs to the isochorismatase family. RutB subfamily.

The enzyme catalyses (Z)-3-ureidoacrylate + H2O + H(+) = (Z)-3-aminoacrylate + NH4(+) + CO2. It catalyses the reaction (Z)-3-ureidoacrylate + H2O = (Z)-3-aminoacrylate + carbamate + H(+). It carries out the reaction (Z)-2-methylureidoacrylate + H2O + H(+) = (Z)-2-methylaminoacrylate + NH4(+) + CO2. Its function is as follows. Hydrolyzes ureidoacrylate to form aminoacrylate and carbamate. The carbamate hydrolyzes spontaneously, thereby releasing one of the nitrogen atoms of the pyrimidine ring as ammonia and one of its carbon atoms as CO2. The chain is Ureidoacrylate amidohydrolase RutB from Escherichia coli O9:H4 (strain HS).